The primary structure comprises 43 residues: Alpha-1-antiproteinase 4 (43 aa).

This sequence belongs to the serpin family. Post-translationally, N-glycosylated with carbohydrates having biantennary side chains. As to expression, plasma.

It localises to the secreted. This chain is Alpha-1-antiproteinase 4, found in Equus caballus (Horse).